A 141-amino-acid polypeptide reads, in one-letter code: Hemoglobin subunit alpha (141 aa).

The Globin domain occupies 1 to 141 (VLSPADKTNV…VSTVLTSKYR (141 aa)). At Ser-3 the chain carries Phosphoserine. An N6-succinyllysine modification is found at Lys-7. Thr-8 bears the Phosphothreonine mark. An N6-succinyllysine modification is found at Lys-11. Residue Lys-16 is modified to N6-acetyllysine; alternate. Lys-16 bears the N6-succinyllysine; alternate mark. Tyr-24 carries the phosphotyrosine modification. Lys-40 carries the post-translational modification N6-succinyllysine. At Ser-49 the chain carries Phosphoserine. His-58 contributes to the O2 binding site. His-87 contributes to the heme b binding site. Position 102 is a phosphoserine (Ser-102). Phosphothreonine is present on Thr-108. At Ser-124 the chain carries Phosphoserine. 2 positions are modified to phosphothreonine: Thr-134 and Thr-137. Ser-138 carries the phosphoserine modification.

This sequence belongs to the globin family. Heterotetramer of two alpha chains and two beta chains. Red blood cells.

Involved in oxygen transport from the lung to the various peripheral tissues. Functionally, hemopressin acts as an antagonist peptide of the cannabinoid receptor CNR1. Hemopressin-binding efficiently blocks cannabinoid receptor CNR1 and subsequent signaling. This is Hemoglobin subunit alpha (HBA) from Phoca vitulina (Harbor seal).